Consider the following 1025-residue polypeptide: MKFFALFIYRPVATILLSVAITLCGILGFRMLPVAPLPQVDFPVIMVSASLPGASPETMASSVATPLERSLGRIAGVSEMTSSSSLGSTRIILQFDFDRDINGAARDVQAAINAAQSLLPSGMPSRPTYRKANPSDAPIMILTLTSDTYSQGELYDFASTQLAPTISQIDGVGDVDVGGSSLPAVRVGLNPQALFNQGVSLDDVRTAVSNANVRKPQGALEDGTHRWQIQTNDELKTAAEYQPLIIHYNNGGAVRLGDVATVTDSVQDVRNAGMTNAKPAILLMIRKLPEANIIQTVDSIRAKLPELQETIPAAIDLQIAQDRSPTIRASLEEVEQTLIISVALVILVVFLFLRSGRATIIPAVSVPVSLIGTFAAMYLCGFSLNNLSLMALTIATGFVVDDAIVVLENIARHLEAGMKPLQAALQGTREVGFTVLSMSLSLVAVFLPLLLMGGLPGRLLREFAVTLSVAIGISLLVSLTLTPMMCGWMLKASKPREQKRLRGFGRMLVALQQGYGKSLKWVLNHTRLVGVVLLGTIALNIWLYISIPKTFFPEQDTGVLMGGIQADQSISFQAMRGKLQDFMKIIRDDPAVDNVTGFTGGSRVNSGMMFITLKPRDERSETAQQIIDRLRVKLAKEPGANLFLMAVQDIRVGGRQSNASYQYTLLSDDLAALREWEPKIRKKLATLPELADVNSDQQDNGAEMNLVYDRDTMARLGIDVQAANSLLNNAFGQRQISTIYQPMNQYKVVMEVDPRYTQDISALEKMFVINNEGKAIPLSYFAKWQPANAPLSVNHQGLSAASTISFNLPTGKSLSDASAAIDRAMTQLGVPSTVRGSFAGTAQVFQETMNSQVILIIAAIATVYIVLGILYESYVHPLTILSTLPSAGVGALLALELFNAPFSLIALIGIMLLIGIVKKNAIMMVDFALEAQRHGNLTPQEAIFQACLLRFRPIMMTTLAALFGALPLVLSGGDGSELRQPLGITIVGGLVMSQLLTLYTTPVVYLFFDRLRLRFSRKPKQTVTE.

The next 12 membrane-spanning stretches (helical) occupy residues 3–23, 333–353, 360–380, 387–407, 431–451, 463–483, 528–548, 853–873, 875–895, 897–917, 953–973, and 984–1004; these read FFAL…AITL, EVEQ…FLFL, IIPA…MYLC, LSLM…IVVL, VGFT…PLLL, FAVT…TLTP, LVGV…ISIP, VILI…LYES, VHPL…LLAL, LFNA…IGIV, PIMM…LSGG, and ITIV…TPVV.

Belongs to the resistance-nodulation-cell division (RND) (TC 2.A.6) family. MdtC subfamily. Part of a tripartite efflux system composed of MdtA, MdtB and MdtC. MdtC forms a heteromultimer with MdtB.

The protein localises to the cell inner membrane. In terms of biological role, the MdtABC tripartite complex confers resistance against novobiocin and deoxycholate. The protein is Multidrug resistance protein MdtC of Escherichia coli (strain ATCC 8739 / DSM 1576 / NBRC 3972 / NCIMB 8545 / WDCM 00012 / Crooks).